We begin with the raw amino-acid sequence, 215 residues long: Thiamine-phosphate synthase (215 aa).

Residues 40–44 (QLRIK) and N72 each bind 4-amino-2-methyl-5-(diphosphooxymethyl)pyrimidine. The Mg(2+) site is built by D73 and D92. Position 111 (S111) interacts with 4-amino-2-methyl-5-(diphosphooxymethyl)pyrimidine. 137 to 139 (TTT) is a 2-[(2R,5Z)-2-carboxy-4-methylthiazol-5(2H)-ylidene]ethyl phosphate binding site. K140 provides a ligand contact to 4-amino-2-methyl-5-(diphosphooxymethyl)pyrimidine. Residues G169 and 189–190 (VS) contribute to the 2-[(2R,5Z)-2-carboxy-4-methylthiazol-5(2H)-ylidene]ethyl phosphate site.

Belongs to the thiamine-phosphate synthase family. Mg(2+) is required as a cofactor.

It catalyses the reaction 2-[(2R,5Z)-2-carboxy-4-methylthiazol-5(2H)-ylidene]ethyl phosphate + 4-amino-2-methyl-5-(diphosphooxymethyl)pyrimidine + 2 H(+) = thiamine phosphate + CO2 + diphosphate. It carries out the reaction 2-(2-carboxy-4-methylthiazol-5-yl)ethyl phosphate + 4-amino-2-methyl-5-(diphosphooxymethyl)pyrimidine + 2 H(+) = thiamine phosphate + CO2 + diphosphate. The catalysed reaction is 4-methyl-5-(2-phosphooxyethyl)-thiazole + 4-amino-2-methyl-5-(diphosphooxymethyl)pyrimidine + H(+) = thiamine phosphate + diphosphate. Its pathway is cofactor biosynthesis; thiamine diphosphate biosynthesis; thiamine phosphate from 4-amino-2-methyl-5-diphosphomethylpyrimidine and 4-methyl-5-(2-phosphoethyl)-thiazole: step 1/1. Its function is as follows. Condenses 4-methyl-5-(beta-hydroxyethyl)thiazole monophosphate (THZ-P) and 2-methyl-4-amino-5-hydroxymethyl pyrimidine pyrophosphate (HMP-PP) to form thiamine monophosphate (TMP). The protein is Thiamine-phosphate synthase of Proteus mirabilis (strain HI4320).